A 330-amino-acid polypeptide reads, in one-letter code: Tryptophan--tRNA ligase (330 aa).

Residues 10–12 (QPS) and 18–19 (GN) each bind ATP. A 'HIGH' region motif is present at residues 11–19 (PSGSVTLGN). Residue D133 participates in L-tryptophan binding. ATP contacts are provided by residues 145 to 147 (GED), I184, and 193 to 197 (KMSKS). The 'KMSKS' region motif lies at 193-197 (KMSKS).

This sequence belongs to the class-I aminoacyl-tRNA synthetase family. As to quaternary structure, homodimer.

It is found in the cytoplasm. It catalyses the reaction tRNA(Trp) + L-tryptophan + ATP = L-tryptophyl-tRNA(Trp) + AMP + diphosphate + H(+). Functionally, catalyzes the attachment of tryptophan to tRNA(Trp). The polypeptide is Tryptophan--tRNA ligase (Bacillus subtilis (strain 168)).